A 1213-amino-acid polypeptide reads, in one-letter code: Filamin-A-interacting protein 1 (1213 aa).

Residues 1–70 (MRSRNQGGES…TSGECERKTK (70 aa)) form a disordered region. Residues 61–70 (TSGECERKTK) show a composition bias toward basic and acidic residues. Ser-138 is subject to Phosphoserine. 2 coiled-coil regions span residues 192-591 (DYMN…ELSC) and 624-781 (PEDN…LSKR). Disordered stretches follow at residues 878-900 (NGPS…PGEV) and 949-976 (KPRI…GPER). Composition is skewed to polar residues over residues 880–894 (PSIT…NSSP) and 960–970 (VMPQKQKSGDT). Ser-979 carries the phosphoserine modification. Positions 1103–1213 (VSTGTVLRSP…STTSLGGGKG (111 aa)) are disordered. The span at 1125–1138 (VTSTITITPVTTSS) shows a compositional bias: low complexity. A compositionally biased stretch (polar residues) spans 1139 to 1156 (ARGTQSVSGQDGSSQRPT). A compositionally biased stretch (low complexity) spans 1168-1179 (AGKPVVAAPGAG).

This sequence belongs to the FILIP1 family. Interacts with FLNA. Interacts with RHOD (in GTP-bound form). As to expression, moderately expressed in adult heart and brain. Weakly expressed in lung, skeletal muscle, ovary, testis, kidney, and fetal brain, and hardly detectable in liver, pancreas, spleen, and fetal liver. Within brain, moderate expression is found in amygdala and caudate nucleus. Expressed in skin fibroblasts.

It is found in the cytoplasm. The protein localises to the cytoskeleton. Functionally, by acting through a filamin-A/F-actin axis, it controls the start of neocortical cell migration from the ventricular zone. May be able to induce the degradation of filamin-A. This is Filamin-A-interacting protein 1 (FILIP1) from Homo sapiens (Human).